The chain runs to 806 residues: Leucine--tRNA ligase (806 aa).

The short motif at P40–H51 is the 'HIGH' region element. The 'KMSKS' region signature appears at K576–S580. K579 is a binding site for ATP.

Belongs to the class-I aminoacyl-tRNA synthetase family.

The protein resides in the cytoplasm. It catalyses the reaction tRNA(Leu) + L-leucine + ATP = L-leucyl-tRNA(Leu) + AMP + diphosphate. The polypeptide is Leucine--tRNA ligase (Halalkalibacterium halodurans (strain ATCC BAA-125 / DSM 18197 / FERM 7344 / JCM 9153 / C-125) (Bacillus halodurans)).